We begin with the raw amino-acid sequence, 694 residues long: Elongation factor G (694 aa).

The tr-type G domain maps to 9–288 (SKIRNIGIMA…VIVKWLPSPK (280 aa)). GTP is bound by residues 18–25 (AHIDAGKT), 82–86 (DTPGH), and 136–139 (NKMD).

The protein belongs to the TRAFAC class translation factor GTPase superfamily. Classic translation factor GTPase family. EF-G/EF-2 subfamily.

It is found in the cytoplasm. Functionally, catalyzes the GTP-dependent ribosomal translocation step during translation elongation. During this step, the ribosome changes from the pre-translocational (PRE) to the post-translocational (POST) state as the newly formed A-site-bound peptidyl-tRNA and P-site-bound deacylated tRNA move to the P and E sites, respectively. Catalyzes the coordinated movement of the two tRNA molecules, the mRNA and conformational changes in the ribosome. The protein is Elongation factor G of Chlamydia felis (strain Fe/C-56) (Chlamydophila felis).